The chain runs to 200 residues: Small ribosomal subunit protein uS4 (200 aa).

Residues 22-43 (TGKELERRPYAPGQHGPTQRKK) form a disordered region. The region spanning 92-170 (QRLDNIVYRL…VPEYVTFDAE (79 aa)) is the S4 RNA-binding domain.

It belongs to the universal ribosomal protein uS4 family. Part of the 30S ribosomal subunit. Contacts protein S5. The interaction surface between S4 and S5 is involved in control of translational fidelity.

Functionally, one of the primary rRNA binding proteins, it binds directly to 16S rRNA where it nucleates assembly of the body of the 30S subunit. With S5 and S12 plays an important role in translational accuracy. This is Small ribosomal subunit protein uS4 from Listeria welshimeri serovar 6b (strain ATCC 35897 / DSM 20650 / CCUG 15529 / CIP 8149 / NCTC 11857 / SLCC 5334 / V8).